A 417-amino-acid chain; its full sequence is Serine hydroxymethyltransferase (417 aa).

Residues L120 and 124–126 (GHL) contribute to the (6S)-5,6,7,8-tetrahydrofolate site. Residue K229 is modified to N6-(pyridoxal phosphate)lysine.

The protein belongs to the SHMT family. Homodimer. The cofactor is pyridoxal 5'-phosphate.

It is found in the cytoplasm. The enzyme catalyses (6R)-5,10-methylene-5,6,7,8-tetrahydrofolate + glycine + H2O = (6S)-5,6,7,8-tetrahydrofolate + L-serine. It functions in the pathway one-carbon metabolism; tetrahydrofolate interconversion. The protein operates within amino-acid biosynthesis; glycine biosynthesis; glycine from L-serine: step 1/1. In terms of biological role, catalyzes the reversible interconversion of serine and glycine with tetrahydrofolate (THF) serving as the one-carbon carrier. This reaction serves as the major source of one-carbon groups required for the biosynthesis of purines, thymidylate, methionine, and other important biomolecules. Also exhibits THF-independent aldolase activity toward beta-hydroxyamino acids, producing glycine and aldehydes, via a retro-aldol mechanism. The chain is Serine hydroxymethyltransferase from Anaeromyxobacter dehalogenans (strain 2CP-C).